The following is a 362-amino-acid chain: Molybdenum import ATP-binding protein ModC (362 aa).

An ABC transporter domain is found at 2 to 236 (VSPIEVRLQM…LDLPLAMGDD (235 aa)). 34-41 (GPSGSGKT) contributes to the ATP binding site. Residues 297-362 (HSSILNRLPV…AQIKAVAVLA (66 aa)) enclose the Mop domain.

This sequence belongs to the ABC transporter superfamily. Molybdate importer (TC 3.A.1.8) family. In terms of assembly, the complex is composed of two ATP-binding proteins (ModC), two transmembrane proteins (ModB) and a solute-binding protein (ModA).

It localises to the cell inner membrane. It catalyses the reaction molybdate(out) + ATP + H2O = molybdate(in) + ADP + phosphate + H(+). Its function is as follows. Part of the ABC transporter complex ModABC involved in molybdenum import. Responsible for energy coupling to the transport system. The chain is Molybdenum import ATP-binding protein ModC from Pseudomonas syringae pv. tomato (strain ATCC BAA-871 / DC3000).